A 525-amino-acid polypeptide reads, in one-letter code: RNA-directed RNA polymerase (525 aa).

In terms of domain architecture, RdRp catalytic spans 72-272; the sequence is LVYADNIYIV…DKERLFCSAA (201 aa).

As to quaternary structure, interacts with VP3 in the cytoplasm. In terms of processing, may exist in multiple phosphorylated forms.

The protein localises to the virion. It carries out the reaction RNA(n) + a ribonucleoside 5'-triphosphate = RNA(n+1) + diphosphate. RNA-dependent RNA polymerase which is found both free and covalently attached to the genomic RNA. May also contain guanylyl and methyl transferase activities. The chain is RNA-directed RNA polymerase (VP1) from Gallus gallus (Chicken).